Here is a 106-residue protein sequence, read N- to C-terminus: Large ribosomal subunit protein uL24 (106 aa).

It belongs to the universal ribosomal protein uL24 family. In terms of assembly, part of the 50S ribosomal subunit.

Its function is as follows. One of two assembly initiator proteins, it binds directly to the 5'-end of the 23S rRNA, where it nucleates assembly of the 50S subunit. One of the proteins that surrounds the polypeptide exit tunnel on the outside of the subunit. This Alkalilimnicola ehrlichii (strain ATCC BAA-1101 / DSM 17681 / MLHE-1) protein is Large ribosomal subunit protein uL24.